A 301-amino-acid chain; its full sequence is MAPMIPPRLQRFPATASADEIFAAFQEDGCVVIEGFISPEQVARFSQEVDPAMEKIPVEVTNNGNSNDRTKRFSKCVIASPTFRNEIIESDLMHELCDRVFSKPGEGMGYHFNDNMVIEVQPGAPAQRLHRDQELYPWWNSMGPAGPECVINFFCAVTPFTEENGATRLVPGSHLWPEFTQINERDCPQFGKIETVPAIMQPGDCYLMSGKVIHGAGHNATTTDRRRALALAIIRRELRPMQAFSLSVPMKLAREMSERSQTMFGFRSSVQHCDVDMVHFWGNDGKDIAHHLGLEAPSVHV.

The Fe cation site is built by His130, Asp132, and His214.

This sequence belongs to the PhyH family. In terms of assembly, homodimer. Fe cation is required as a cofactor.

The catalysed reaction is preaustinoid A1 + 2-oxoglutarate + O2 = berkeleyone B + succinate + CO2 + H2O. It catalyses the reaction berkeleyone B + 2-oxoglutarate + O2 = berkeleydione + succinate + CO2 + H2O. The enzyme catalyses preaustinoid A + 2 2-oxoglutarate + 2 O2 = berkeleytrione + 2 succinate + 2 CO2 + H2O. The protein operates within secondary metabolite biosynthesis; terpenoid biosynthesis. Multifunctional dioxygenase; part of the gene cluster that mediates the biosynthesis of paraherquonin, a meroterpenoid with a unique, highly congested hexacyclic molecular architecture. The first step of the pathway is the synthesis of 3,5-dimethylorsellinic acid (DMOA) by the polyketide synthase prhL. Synthesis of DMOA is followed by farnesylation by the prenyltransferase prhE, methylesterification by the methyl-transferase prhM, epoxidation of the prenyl chain by the flavin-dependent monooxygenase prhF, and cyclization of the farnesyl moiety by the terpene cyclase prhH, to yield the tetracyclic intermediate, protoaustinoid A. The short chain dehydrogenase prhI then oxidizes the C-3 alcohol group of the terpene cyclase product to transform protoaustinoid A into protoaustinoid B. The FAD-binding monooxygenase prhJ catalyzes the oxidation of protoaustinoid B into preaustinoid A which is further oxidized into preaustinoid A1 by FAD-binding monooxygenase phrK. Finally, prhA leads to berkeleydione via the berkeleyone B intermediate. PrhA is a multifunctional dioxygenase that first desaturates at C5-C6 to form berkeleyone B, followed by rearrangement of the A/B-ring to form the cycloheptadiene moiety in berkeleydione. Berkeleydione serves as the key intermediate for the biosynthesis of paraherquonin as well as many other meroterpenoids. The cytochrome P450 monooxygenases prhB, prhD, and prhN, as well as the isomerase prhC, are probably involved in the late stage of paraherquonin biosynthesis, after the production of berkeleydione. Especially prhC might be a multifunctional enzyme that catalyzes the D-ring expansion via intramolecular methoxy rearrangement, as well as the hydrolysis of the expanded D-ring. The sequence is that of Multifunctional dioxygenase prhA from Penicillium brasilianum.